Consider the following 506-residue polypeptide: Maturase K (506 aa).

It belongs to the intron maturase 2 family. MatK subfamily.

Its subcellular location is the plastid. The protein localises to the chloroplast. Usually encoded in the trnK tRNA gene intron. Probably assists in splicing its own and other chloroplast group II introns. The polypeptide is Maturase K (Atractylodes lancea (Atractylodes japonica)).